The chain runs to 122 residues: Small ribosomal subunit protein uS13 (122 aa).

Residues 98–122 form a disordered region; sequence VRGQRTHTNARTRKGPAKAIAGKKK.

It belongs to the universal ribosomal protein uS13 family. In terms of assembly, part of the 30S ribosomal subunit. Forms a loose heterodimer with protein S19. Forms two bridges to the 50S subunit in the 70S ribosome.

Its function is as follows. Located at the top of the head of the 30S subunit, it contacts several helices of the 16S rRNA. In the 70S ribosome it contacts the 23S rRNA (bridge B1a) and protein L5 of the 50S subunit (bridge B1b), connecting the 2 subunits; these bridges are implicated in subunit movement. Contacts the tRNAs in the A and P-sites. The protein is Small ribosomal subunit protein uS13 of Jannaschia sp. (strain CCS1).